A 246-amino-acid chain; its full sequence is Vacuolar iron transporter 2 (246 aa).

Residues 1–32 (MVKEFVQDEEKQRLLLDEHTEKHFTAGEVVRD) are Cytoplasmic-facing. Residues 33–53 (IIIGVSDGLTVPFALAAGLSG) traverse the membrane as a helical segment. At 54-58 (ANAPS) the chain is on the vacuolar side. Residues 59-79 (ALVLTAGLAEVAAGAISMGLG) form a helical membrane-spanning segment. At 80 to 164 (GYLAAKSDAD…PEPRRALMSA (85 aa)) the chain is on the cytoplasmic side. The interval 86–161 (SDADHYHREL…LEKPEPRRAL (76 aa)) is cytoplasmic metal binding domain (MBD). Positions 98, 101, 109, 112, 145, and 149 each coordinate Fe cation. A helical transmembrane segment spans residues 165 to 185 (GTIALAYVVGGLVPLLPYMFV). The Vacuolar segment spans residues 186 to 190 (PTADR). The helical transmembrane segment at 191–211 (AMATSVVVTLAALLFFGYVKG) threads the bilayer. Over 212–218 (RFTGNRP) the chain is Cytoplasmic. Residues 219–239 (FISAFQTAVIGALASAAAFGM) form a helical membrane-spanning segment. Residues 240-246 (AKAVQSI) lie on the Vacuolar side of the membrane.

Belongs to the CCC1 family. In terms of assembly, homodimer. The dimeric interaction is mediated by both the transmembrane domains (TMDs) and the cytoplasmic metal binding domain (MBD). In terms of tissue distribution, expressed in leaf sheaths and at lower level in leaf blades.

The protein localises to the vacuole membrane. The catalysed reaction is Fe(2+)(in) = Fe(2+)(out). Vacuolar iron transporter involved in the transfer of iron ions from the cytosol to the vacuole for intracellular iron storage. Vacuolar iron storage is required for seed embryo and seedling development. May be involved in the regulation of iron translocation between flag leaves and seeds. Can transport zinc ions from the cytosol to the vacuole. The sequence is that of Vacuolar iron transporter 2 from Oryza sativa subsp. japonica (Rice).